A 432-amino-acid polypeptide reads, in one-letter code: Adenylosuccinate synthetase (432 aa).

Residues 13-19 and 41-43 contribute to the GTP site; these read GDEGKGK and GHT. Catalysis depends on Asp14, which acts as the Proton acceptor. 2 residues coordinate Mg(2+): Asp14 and Gly41. Residues 14 to 17, 39 to 42, Thr130, Arg144, Gln225, Thr240, and Arg304 each bind IMP; these read DEGK and NAGH. His42 serves as the catalytic Proton donor. 300–306 serves as a coordination point for substrate; sequence ATTGRRR. Residues Arg306, 332–334, and 415–417 each bind GTP; these read KLD and STG.

The protein belongs to the adenylosuccinate synthetase family. As to quaternary structure, homodimer. Mg(2+) is required as a cofactor.

The protein localises to the cytoplasm. It catalyses the reaction IMP + L-aspartate + GTP = N(6)-(1,2-dicarboxyethyl)-AMP + GDP + phosphate + 2 H(+). The protein operates within purine metabolism; AMP biosynthesis via de novo pathway; AMP from IMP: step 1/2. Plays an important role in the de novo pathway of purine nucleotide biosynthesis. Catalyzes the first committed step in the biosynthesis of AMP from IMP. This chain is Adenylosuccinate synthetase, found in Klebsiella pneumoniae subsp. pneumoniae (strain ATCC 700721 / MGH 78578).